The following is a 257-amino-acid chain: Ras-related protein Rab-26 (257 aa).

The segment at 1–53 (MSRKKTPKSKGGSVPAASTLPAAANGPRLAHPRTARPGPEAPPNGPPQSGRPS) is disordered. The GTP site is built by Ser-73, Gly-74, Val-75, Gly-76, Lys-77, Thr-78, Cys-79, Ser-96, and Thr-97. Residue Thr-78 coordinates Mg(2+). 2 consecutive short sequence motifs (switch) follow at residues 87 to 102 (GAFLAGTFISTVGIDF) and 120 to 137 (DTAGQERFRSVTHAYYRD). The Mg(2+) site is built by Thr-97 and Asp-120. Residues Gly-123, Asn-178, Lys-179, Asp-181, Ala-209, and Lys-210 each contribute to the GTP site. Residues Cys-254 and Cys-255 are each lipidated (S-geranylgeranyl cysteine).

It belongs to the small GTPase superfamily. Rab family. In terms of assembly, interacts with ADRA2B. Interacts with RIMS1. Requires Mg(2+) as cofactor. As to expression, expressed in pancreas, kidney, brain, submandibular gland, and lung.

Its subcellular location is the cytoplasmic vesicle. It localises to the secretory vesicle membrane. It is found in the golgi apparatus membrane. The catalysed reaction is GTP + H2O = GDP + phosphate + H(+). With respect to regulation, regulated by guanine nucleotide exchange factors (GEFs) which promote the exchange of bound GDP for free GTP. Regulated by GTPase activating proteins (GAPs) which increase the GTP hydrolysis activity. Inhibited by GDP dissociation inhibitors (GDIs). In terms of biological role, the small GTPases Rab are key regulators of intracellular membrane trafficking, from the formation of transport vesicles to their fusion with membranes. Rabs cycle between an inactive GDP-bound form and an active GTP-bound form that is able to recruit to membranes different set of downstream effectors directly responsible for vesicle formation, movement, tethering and fusion. RAB26 mediates transport of ADRA2A and ADRA2B from the Golgi to the cell membrane. Plays a role in the maturation of zymogenic granules and in pepsinogen secretion in the stomach. Plays a role in the secretion of amylase from acinar granules in the parotid gland. The sequence is that of Ras-related protein Rab-26 from Rattus norvegicus (Rat).